The sequence spans 453 residues: Probable glycine dehydrogenase (decarboxylating) subunit 1 (453 aa).

It belongs to the GcvP family. N-terminal subunit subfamily. As to quaternary structure, the glycine cleavage system is composed of four proteins: P, T, L and H. In this organism, the P 'protein' is a heterodimer of two subunits.

It catalyses the reaction N(6)-[(R)-lipoyl]-L-lysyl-[glycine-cleavage complex H protein] + glycine + H(+) = N(6)-[(R)-S(8)-aminomethyldihydrolipoyl]-L-lysyl-[glycine-cleavage complex H protein] + CO2. The glycine cleavage system catalyzes the degradation of glycine. The P protein binds the alpha-amino group of glycine through its pyridoxal phosphate cofactor; CO(2) is released and the remaining methylamine moiety is then transferred to the lipoamide cofactor of the H protein. This Dictyoglomus thermophilum (strain ATCC 35947 / DSM 3960 / H-6-12) protein is Probable glycine dehydrogenase (decarboxylating) subunit 1.